Reading from the N-terminus, the 547-residue chain is Chaperonin GroEL (547 aa).

ATP contacts are provided by residues 30–33, K51, 87–91, G415, and D496; these read TLGP and DGTTT. Residues 528–547 are disordered; it reads KEGAAPAGGMPDMGGMGGMM. Over residues 538-547 the composition is skewed to gly residues; sequence PDMGGMGGMM.

This sequence belongs to the chaperonin (HSP60) family. Forms a cylinder of 14 subunits composed of two heptameric rings stacked back-to-back. Interacts with the co-chaperonin GroES.

The protein resides in the cytoplasm. The catalysed reaction is ATP + H2O + a folded polypeptide = ADP + phosphate + an unfolded polypeptide.. In terms of biological role, together with its co-chaperonin GroES, plays an essential role in assisting protein folding. The GroEL-GroES system forms a nano-cage that allows encapsulation of the non-native substrate proteins and provides a physical environment optimized to promote and accelerate protein folding. This chain is Chaperonin GroEL, found in Ruegeria sp. (strain TM1040) (Silicibacter sp.).